Here is a 466-residue protein sequence, read N- to C-terminus: Chromosomal replication initiator protein DnaA (466 aa).

The domain I, interacts with DnaA modulators stretch occupies residues Met1–Thr86. Residues Thr86–Ser129 form a domain II region. The domain III, AAA+ region stretch occupies residues Asn130–Ala346. Gly174, Gly176, Lys177, and Thr178 together coordinate ATP. The interval Asn347–Ser466 is domain IV, binds dsDNA.

Belongs to the DnaA family. In terms of assembly, oligomerizes as a right-handed, spiral filament on DNA at oriC.

It is found in the cytoplasm. Functionally, plays an essential role in the initiation and regulation of chromosomal replication. ATP-DnaA binds to the origin of replication (oriC) to initiate formation of the DNA replication initiation complex once per cell cycle. Binds the DnaA box (a 9 base pair repeat at the origin) and separates the double-stranded (ds)DNA. Forms a right-handed helical filament on oriC DNA; dsDNA binds to the exterior of the filament while single-stranded (ss)DNA is stabiized in the filament's interior. The ATP-DnaA-oriC complex binds and stabilizes one strand of the AT-rich DNA unwinding element (DUE), permitting loading of DNA polymerase. After initiation quickly degrades to an ADP-DnaA complex that is not apt for DNA replication. Binds acidic phospholipids. The polypeptide is Chromosomal replication initiator protein DnaA (Salmonella gallinarum (strain 287/91 / NCTC 13346)).